A 1735-amino-acid chain; its full sequence is Glutamine and serine-rich protein 1 (1735 aa).

N-acetylmethionine is present on Met1. Residues 267–297 (AIPSSGYPPSTTKIKSCSTEQPLTSTKTPKP) show a composition bias toward polar residues. Disordered regions lie at residues 267–301 (AIPSSGYPPSTTKIKSCSTEQPLTSTKTPKPQSII), 414–440 (TRDLSSVSQSQSYSSGHSQGLSPVSQT), 479–518 (SRAQNLPDSSPTQNYISMHSSQNVQTQESSSPQSQKFLPA), and 533–561 (LQNNITSPDPKSYAERKLDSDVYPSSKQE). Low complexity predominate over residues 417-440 (LSSVSQSQSYSSGHSQGLSPVSQT). 3 positions are modified to phosphoserine: Ser586, Ser615, and Ser886. Thr949 bears the Phosphothreonine mark. A disordered region spans residues 964–1033 (GPSHEVQEQS…EFTLGGDDSG (70 aa)). The span at 971-985 (EQSSGPFKKQSATNL) shows a compositional bias: polar residues. Ser987 carries the phosphoserine modification. The segment covering 997–1024 (STLNNNRNQEFVSSSRSISGENATSESE) has biased composition (polar residues). Glycyl lysine isopeptide (Lys-Gly) (interchain with G-Cter in SUMO2) cross-links involve residues Lys1058 and Lys1083. Disordered stretches follow at residues 1073 to 1132 (KKRA…EKMR) and 1178 to 1217 (RPGTQMVRTFCPPPLPKPSSTTPTPLVSETGGNSPSDKVD). Residues 1120 to 1132 (SCHDGYQHQEKMR) show a composition bias toward basic and acidic residues. A phosphoserine mark is found at Ser1211, Ser1230, Ser1231, and Ser1239. The tract at residues 1256–1286 (TSDKKKKTEALQVATTSPTANTTGTATTSST) is disordered. Over residues 1269–1286 (ATTSPTANTTGTATTSST) the composition is skewed to low complexity. Thr1341 is modified (phosphothreonine). Phosphoserine is present on Ser1348. Positions 1441–1532 (VCSKKPRNKP…SSDDEEFEPP (92 aa)) are disordered. The span at 1449 to 1478 (KPSQTIRTVQAKPSSSSKTSDPLASKTTTT) shows a compositional bias: polar residues. Basic and acidic residues predominate over residues 1492–1508 (VKAEPPPKKRKKWKEEF).

In terms of assembly, interacts with TET1.

Its subcellular location is the chromosome. Functionally, plays an essential role in the protection and maintenance of transcriptional and developmental programs. Protects many bivalent promoters and poised enhancers from hypermethylation, showing a marked preference for these regulatory elements over other types of promoters or enhancers. Mechanistically, cooperates with TET1 and binds to DNA in a common complex to inhibit the binding of DNMT3A/3B and therefore de novo methylation. This is Glutamine and serine-rich protein 1 (QSER1) from Homo sapiens (Human).